Reading from the N-terminus, the 140-residue chain is uncharacterized protein (140 aa).

This is an uncharacterized protein from Mycoplasma genitalium (strain ATCC 33530 / DSM 19775 / NCTC 10195 / G37) (Mycoplasmoides genitalium).